The chain runs to 657 residues: Transcription factor 12 (657 aa).

Residues Met1–Tyr20 are compositionally biased toward polar residues. Disordered regions lie at residues Met1–Ser76, Leu89–Asp285, Pro297–Ser340, Val459–Met555, and Lys628–Met657. Over residues His30–His43 the composition is skewed to basic and acidic residues. 2 stretches are compositionally biased toward polar residues: residues Thr49–Ser70 and Ala93–Ser112. Residues Leu68 to Leu89 form a leucine-zipper region. Residues Lys130–Pro136 carry the Nuclear localization signal motif. Composition is skewed to polar residues over residues Met168–Ser193, Gly202–Ser216, and Val230–Pro254. Positions Thr300–Pro311 are enriched in low complexity. The span at Val312–Ser340 shows a compositional bias: polar residues. Composition is skewed to basic and acidic residues over residues Ile493–His505, Asp511–Val526, and Pro543–Met555. In terms of domain architecture, bHLH spans Glu552–Leu605. Residues Gln607–Ser630 are class A specific domain. A compositionally biased stretch (polar residues) spans Ser648 to Met657.

In terms of assembly, efficient DNA binding requires dimerization with another bHLH protein. Forms homo- or heterooligomers with myogenin, E12 and ITF2 proteins.

It localises to the nucleus. Transcriptional regulator. Involved in the initiation of neuronal differentiation. Activates transcription by binding to the E box-containing promoter. The chain is Transcription factor 12 (TCF12) from Gallus gallus (Chicken).